A 151-amino-acid chain; its full sequence is 3-hydroxyacyl-[acyl-carrier-protein] dehydratase FabZ (151 aa).

Histidine 56 is a catalytic residue.

The protein belongs to the thioester dehydratase family. FabZ subfamily.

It is found in the cytoplasm. It catalyses the reaction a (3R)-hydroxyacyl-[ACP] = a (2E)-enoyl-[ACP] + H2O. Functionally, involved in unsaturated fatty acids biosynthesis. Catalyzes the dehydration of short chain beta-hydroxyacyl-ACPs and long chain saturated and unsaturated beta-hydroxyacyl-ACPs. This Rhodopseudomonas palustris (strain BisB18) protein is 3-hydroxyacyl-[acyl-carrier-protein] dehydratase FabZ.